The following is a 295-amino-acid chain: Nucleotide-binding protein LSEI_0959 (295 aa).

ATP is bound at residue 12-19 (GMSGAGKT). 62–65 (DLRS) provides a ligand contact to GTP.

The protein belongs to the RapZ-like family.

Displays ATPase and GTPase activities. This chain is Nucleotide-binding protein LSEI_0959, found in Lacticaseibacillus paracasei (strain ATCC 334 / BCRC 17002 / CCUG 31169 / CIP 107868 / KCTC 3260 / NRRL B-441) (Lactobacillus paracasei).